We begin with the raw amino-acid sequence, 502 residues long: AMP phosphorylase (502 aa).

AMP is bound by residues glycine 168, 195–200 (SRAITS), and threonine 204. Residue aspartate 257 is the Proton donor of the active site. AMP contacts are provided by serine 265 and lysine 289.

This sequence belongs to the thymidine/pyrimidine-nucleoside phosphorylase family. Type 2 subfamily.

It carries out the reaction AMP + phosphate = alpha-D-ribose 1,5-bisphosphate + adenine. The catalysed reaction is CMP + phosphate = cytosine + alpha-D-ribose 1,5-bisphosphate. The enzyme catalyses UMP + phosphate = alpha-D-ribose 1,5-bisphosphate + uracil. Catalyzes the conversion of AMP and phosphate to adenine and ribose 1,5-bisphosphate (R15P). Exhibits phosphorylase activity toward CMP and UMP in addition to AMP. Functions in an archaeal AMP degradation pathway, together with R15P isomerase and RubisCO. This chain is AMP phosphorylase, found in Hyperthermus butylicus (strain DSM 5456 / JCM 9403 / PLM1-5).